The following is a 3072-amino-acid chain: E1A-binding protein p400 (3072 aa).

A compositionally biased stretch (polar residues) spans 1 to 22 (MHHGSGPQNVQHQLQRSRSFTG). Disordered stretches follow at residues 1–55 (MHHG…SPGY), 125–149 (PMSQQVQTQSPTQPSPGPGQTLQNV), and 222–250 (LSQPHAQSGGTIHHLGPQSPAAAGGTGLQ). Positions 31 to 40 (PNLPPSPAAP) are enriched in pro residues. Low complexity-rich tracts occupy residues 41 to 53 (FAPSASPSAPQSP) and 125 to 136 (PMSQQVQTQSPT). 2 positions are modified to phosphoserine: Ser-52 and Ser-134. Phosphoserine occurs at positions 315 and 321. Disordered stretches follow at residues 485 to 519 (SLTGSLVVGPGSATEADPFKRQQVMPPTEQSKRPR), 544 to 601 (MPTV…ASVP), and 635 to 769 (APIP…SQDK). A compositionally biased stretch (low complexity) spans 556 to 569 (QATQLTGQKQSQQQ). The segment covering 570–583 (YDPSTGPPVQNAAS) has biased composition (polar residues). Positions 586-599 (TPPPQLPARLPPAS) are enriched in pro residues. 3 stretches are compositionally biased toward low complexity: residues 646–657 (PAPSSQPAQPAL), 668–682 (QTSQLSSQTQTVAST), and 695–710 (SLPTSSSSSSLVPVSG). Polar residues-rich tracts occupy residues 724–741 (NRPSSATNKALSPITSRS) and 754–765 (SPAQNAASSQDG). 3 positions are modified to phosphoserine: Ser-735, Ser-741, and Ser-754. The HSA domain maps to 798–870 (LPKLQEAPRP…EQSRLRRIAA (73 aa)). Over residues 914 to 928 (ESRLKGFDTSPEHSL) the composition is skewed to basic and acidic residues. 2 disordered regions span residues 914–952 (ESRLKGFDTSPEHSLDLGISGRKRKASTSLTDDEVEDEE) and 997–1024 (FQWPQPEPDHEESSGEEDVEDCPSDRES). Thr-922 bears the Phosphothreonine mark. Residues Ser-923, Ser-927, and Ser-940 each carry the phosphoserine modification. A Phosphothreonine modification is found at Thr-944. Positions 950-1364 (DEEETIEEEE…SVLSVLTRLQ (415 aa)) are interactions with RUVBL1 and RUVBL2. Phosphoserine is present on residues Ser-1009 and Ser-1010. The 166-residue stretch at 1102–1267 (AKLYRKNLNG…WTMVHFLIPG (166 aa)) folds into the Helicase ATP-binding domain. Residue 1115-1122 (DEAGLGKT) participates in ATP binding. The DEAD box-like motif lies at 1218–1221 (DEMQ). Lys-1471 carries the post-translational modification N6-acetyllysine. The tract at residues 1473-1503 (EGRTVAFPSTHPPRMANTNTSTATPQGQVRG) is disordered. The segment covering 1488–1499 (ANTNTSTATPQG) has biased composition (polar residues). Phosphoserine occurs at positions 1646 and 1650. Residues 1815 to 1972 (KLEALAILLQ…GNDYSMAFLT (158 aa)) enclose the Helicase C-terminal domain. Disordered stretches follow at residues 2033–2062 (AQRSTEEAVPGSSSVAVSSDSDGSRYDEEP) and 2203–2227 (KERKRHKTDPSAAGRKKKQRHGEAV). Low complexity predominate over residues 2043 to 2053 (GSSSVAVSSDS). N6-acetyllysine occurs at positions 2265 and 2272. In terms of domain architecture, Myb-like spans 2276–2345 (EPAQDSPDWL…QCRNRYENVI (70 aa)). The interval 2440–2699 (KEKKALADQQ…QQQQQQQQQT (260 aa)) is interaction with ZNF42. Residues 2441-2534 (EKKALADQQK…PQSKGQPTMT (94 aa)) form a disordered region. Low complexity-rich tracts occupy residues 2446-2455 (ADQQKAQQPP) and 2463-2478 (QQQQQQQQQQQQQQQQ). Residues 2479-2493 (QPPPPPQQPPPPVPQ) show a composition bias toward pro residues. Residues 2494 to 2526 (PQAASSQTPAGQPAVQPQPQPQVQTQPQPVQPQ) are compositionally biased toward low complexity. Phosphoserine is present on Ser-2614. Disordered stretches follow at residues 2734-2790 (QKMQ…TGTT) and 3028-3072 (ASLQ…PPCQ). Pro residues predominate over residues 2739 to 2754 (PPQPPPPQAQPGPPQQ). The span at 2755 to 2775 (PAQVQVQTPQPPQQQQSPQLT) shows a compositional bias: low complexity. Polar residues predominate over residues 3042–3053 (PASSDSPSQQPK).

It belongs to the SNF2/RAD54 helicase family. SWR1 subfamily. In terms of assembly, component of the NuA4 histone acetyltransferase complex which contains the catalytic subunit KAT5/TIP60 and the subunits EP400, TRRAP/PAF400, BRD8/SMAP, EPC1, DMAP1/DNMAP1, RUVBL1/TIP49, RUVBL2, ING3, actin, ACTL6A/BAF53A, MORF4L1/MRG15, MORF4L2/MRGX, MRGBP, YEATS4/GAS41, VPS72/YL1 and MEAF6. May also participate in the formation of NuA4 related complexes which lack the KAT5/TIP60 catalytic subunit, but which include the SWI/SNF related protein SRCAP. The NuA4 complex interacts with MYC. EP400 interacts with TRRAP, RUVBL1 and RUVBL2. Component of a SWR1-like complex. Interacts with ZNF42. Interacts with PHF5A. In terms of tissue distribution, expressed in brain, thymus, lung, liver, spleen, kidney, colon and bone marrow.

It localises to the nucleus. Functionally, component of the NuA4 histone acetyltransferase complex which is involved in transcriptional activation of select genes principally by acetylation of nucleosomal histones H4 and H2A. This modification may both alter nucleosome - DNA interactions and promote interaction of the modified histones with other proteins which positively regulate transcription. May be required for transcriptional activation of E2F1 and MYC target genes during cellular proliferation. The NuA4 complex ATPase and helicase activities seem to be, at least in part, contributed by the association of RUVBL1 and RUVBL2 with EP400. Component of a SWR1-like complex that specifically mediates the removal of histone H2A.Z/H2AZ1 from the nucleosome. Regulates transcriptional activity of ZNF42. The polypeptide is E1A-binding protein p400 (Ep400) (Mus musculus (Mouse)).